We begin with the raw amino-acid sequence, 644 residues long: Beta-mannosyltransferase 2 (644 aa).

Topologically, residues 1 to 6 (MRTRLN) are cytoplasmic. The helical transmembrane segment at 7–27 (FLLLCIASVLSVIWIGVLLTW) threads the bilayer. Residues 28–644 (NDNNLGGISL…NDKKDLKIRQ (617 aa)) lie on the Extracellular side of the membrane. Residue asparagine 484 is glycosylated (N-linked (GlcNAc...) asparagine). Residues 512 to 644 (TRGEAERRRR…NDKKDLKIRQ (133 aa)) are a coiled coil. A disordered region spans residues 517-644 (ERRRRVAEER…NDKKDLKIRQ (128 aa)).

The protein belongs to the BMT family.

Its subcellular location is the membrane. Beta-mannosyltransferase involved in cell wall biosynthesis. Initiates the beta-mannosylation of core N-linked glycans. The polypeptide is Beta-mannosyltransferase 2 (BMT2) (Komagataella phaffii (strain GS115 / ATCC 20864) (Yeast)).